The sequence spans 732 residues: Elongation factor 2 (732 aa).

Residues 19 to 260 (ERIRNIGIAA…MVVKHLPNPI (242 aa)) enclose the tr-type G domain. GTP contacts are provided by residues 28 to 35 (AHIDHGKT), 94 to 98 (DTPGH), and 148 to 151 (NKVD). Diphthamide is present on His-597.

Belongs to the TRAFAC class translation factor GTPase superfamily. Classic translation factor GTPase family. EF-G/EF-2 subfamily.

The protein localises to the cytoplasm. Functionally, catalyzes the GTP-dependent ribosomal translocation step during translation elongation. During this step, the ribosome changes from the pre-translocational (PRE) to the post-translocational (POST) state as the newly formed A-site-bound peptidyl-tRNA and P-site-bound deacylated tRNA move to the P and E sites, respectively. Catalyzes the coordinated movement of the two tRNA molecules, the mRNA and conformational changes in the ribosome. The sequence is that of Elongation factor 2 (fusA) from Pyrococcus abyssi (strain GE5 / Orsay).